The sequence spans 245 residues: Ribosomal RNA small subunit methyltransferase G (245 aa).

Residues Gly79, Phe84, 130–131, and Arg150 each bind S-adenosyl-L-methionine; that span reads AE.

Belongs to the methyltransferase superfamily. RNA methyltransferase RsmG family.

It localises to the cytoplasm. Specifically methylates the N7 position of a guanine in 16S rRNA. This is Ribosomal RNA small subunit methyltransferase G from Limosilactobacillus fermentum (strain NBRC 3956 / LMG 18251) (Lactobacillus fermentum).